The following is a 298-amino-acid chain: 4-hydroxy-tetrahydrodipicolinate synthase (298 aa).

Threonine 48 provides a ligand contact to pyruvate. The Proton donor/acceptor role is filled by tyrosine 137. The active-site Schiff-base intermediate with substrate is lysine 166. Pyruvate is bound at residue isoleucine 207.

The protein belongs to the DapA family. In terms of assembly, homotetramer; dimer of dimers.

The protein localises to the cytoplasm. It carries out the reaction L-aspartate 4-semialdehyde + pyruvate = (2S,4S)-4-hydroxy-2,3,4,5-tetrahydrodipicolinate + H2O + H(+). It functions in the pathway amino-acid biosynthesis; L-lysine biosynthesis via DAP pathway; (S)-tetrahydrodipicolinate from L-aspartate: step 3/4. Catalyzes the condensation of (S)-aspartate-beta-semialdehyde [(S)-ASA] and pyruvate to 4-hydroxy-tetrahydrodipicolinate (HTPA). This Campylobacter lari (strain RM2100 / D67 / ATCC BAA-1060) protein is 4-hydroxy-tetrahydrodipicolinate synthase.